The chain runs to 1341 residues: uncharacterized protein (1341 aa).

A DNA-binding region (zn(2)-C6 fungal-type) is located at residues 41–68 (CLLCRRRKQRCDHKLPSCTACLKAGIKC). Composition is skewed to low complexity over residues 72–93 (SKYS…AGTV), 779–791 (SNSA…SNSN), 864–906 (SNSS…NDNN), 920–967 (NHNN…GNNS), and 1036–1050 (SPSK…SSHS). 4 disordered regions span residues 72–100 (SKYS…PHPV), 770–804 (ISSG…MPPA), 864–971 (SNSS…QYVR), and 1031–1116 (TMTN…NSNP). Positions 1057-1076 (MTQSPTPYPQTSNMLPQQHV) are enriched in polar residues. Residues 1078–1090 (RPLPQQQREQPQQ) are compositionally biased toward low complexity. The segment covering 1091–1116 (HITSPQRFSESNFTNQLNNGMINSNP) has biased composition (polar residues). Position 1143 is a phosphoserine (S1143). The span at 1220–1230 (SQEPSSLSMDK) shows a compositional bias: polar residues. The tract at residues 1220-1240 (SQEPSSLSMDKQQQQHQQQNM) is disordered.

The protein localises to the nucleus. This is an uncharacterized protein from Saccharomyces cerevisiae (strain ATCC 204508 / S288c) (Baker's yeast).